A 393-amino-acid chain; its full sequence is RNA polymerase II holoenzyme cyclin-like subunit (393 aa).

One can recognise a Cyclin N-terminal domain in the interval 51 to 146 (ICKRLNLRQR…LLEEMEFDMV (96 aa)).

The protein belongs to the cyclin family. Cyclin C subfamily. In terms of assembly, component of the SRB8-11 complex, a regulatory module of the Mediator complex.

It localises to the nucleus. Its function is as follows. Component of the SRB8-11 complex. The SRB8-11 complex is a regulatory module of the Mediator complex which is itself involved in regulation of basal and activated RNA polymerase II-dependent transcription. The SRB8-11 complex may be involved in the transcriptional repression of a subset of genes regulated by Mediator. It may inhibit the association of the Mediator complex with RNA polymerase II to form the holoenzyme complex. The SRB8-11 complex phosphorylates the C-terminal domain (CTD) of the largest subunit of RNA polymerase II. The polypeptide is RNA polymerase II holoenzyme cyclin-like subunit (SSN8) (Mycosarcoma maydis (Corn smut fungus)).